Reading from the N-terminus, the 81-residue chain is ATP synthase subunit c, chloroplastic (81 aa).

Transmembrane regions (helical) follow at residues P3 to G23 and L57 to A77.

It belongs to the ATPase C chain family. F-type ATPases have 2 components, F(1) - the catalytic core - and F(0) - the membrane proton channel. F(1) has five subunits: alpha(3), beta(3), gamma(1), delta(1), epsilon(1). F(0) has four main subunits: a(1), b(1), b'(1) and c(10-14). The alpha and beta chains form an alternating ring which encloses part of the gamma chain. F(1) is attached to F(0) by a central stalk formed by the gamma and epsilon chains, while a peripheral stalk is formed by the delta, b and b' chains.

The protein localises to the plastid. Its subcellular location is the chloroplast thylakoid membrane. Functionally, f(1)F(0) ATP synthase produces ATP from ADP in the presence of a proton or sodium gradient. F-type ATPases consist of two structural domains, F(1) containing the extramembraneous catalytic core and F(0) containing the membrane proton channel, linked together by a central stalk and a peripheral stalk. During catalysis, ATP synthesis in the catalytic domain of F(1) is coupled via a rotary mechanism of the central stalk subunits to proton translocation. Its function is as follows. Key component of the F(0) channel; it plays a direct role in translocation across the membrane. A homomeric c-ring of between 10-14 subunits forms the central stalk rotor element with the F(1) delta and epsilon subunits. The chain is ATP synthase subunit c, chloroplastic from Ceratophyllum demersum (Rigid hornwort).